The primary structure comprises 215 residues: uncharacterized protein (215 aa).

Residues 25-48 (LKSASPGPAPASQQASSFGSAPAQ) form a disordered region. Residues 27 to 47 (SASPGPAPASQQASSFGSAPA) show a composition bias toward low complexity.

This is an uncharacterized protein from Homo sapiens (Human).